The sequence spans 1009 residues: Membrane alanyl aminopeptidase (1009 aa).

A signal peptide spans 1-15 (MAAIKLLVLSLACAC). A propeptide spans 16–52 (VIAHSPIPPASRTIFLDERLEGGAFENIDAFENIELS) (activation peptide). Substrate is bound at residue 338-342 (GAMEN). Position 374 (histidine 374) interacts with Zn(2+). Glutamate 375 serves as the catalytic Proton acceptor. The Zn(2+) site is built by histidine 378 and glutamate 397. Asparagine 906 carries an N-linked (GlcNAc...) asparagine glycan. The interval 955–980 (PSTSTTSTTAAPTTVTQPTITEPSTP) is disordered. Aspartate 987 is lipidated: GPI-anchor amidated aspartate. Residues 988–1009 (SAMTSFASLFIISLGAILHLIL) constitute a propeptide, removed in mature form.

It belongs to the peptidase M1 family. Requires Zn(2+) as cofactor.

It is found in the cell membrane. In terms of biological role, binds to the B.thuringiensis toxin, CryIA(C). This chain is Membrane alanyl aminopeptidase, found in Heliothis virescens (Tobacco budworm moth).